The chain runs to 2388 residues: Spectrin beta chain, non-erythrocytic 2 (2388 aa).

Position 2 is an N-acetylserine (Ser2). Positions 2–278 are actin-binding; it reads SSTLSPTDFD…IITYVATYYH (277 aa). A phosphoserine mark is found at Ser6 and Ser31. Calponin-homology (CH) domains are found at residues 57-161 and 176-281; these read AVQK…LRFQ and KSAK…HYFS. Spectrin repeat units lie at residues 306 to 414, 427 to 527, 532 to 639, 642 to 744, 749 to 849, and 856 to 954; these read LVEK…LALR, AARF…RERL, ELQK…RLEE, RLWR…QRLA, LYQF…RALE, and TMLS…KAAL. A Phosphoserine modification is found at Ser959. Spectrin repeat units lie at residues 960–1063, 1066–1169, 1174–1266, 1279–1379, 1384–1485, 1489–1586, 1589–1692, 1696–1797, 1801–1904, 1910–2010, and 2017–2078; these read IQNY…SLGE, RLQD…GRLA, FQGF…NQEA, EQQH…ARSL, RAEL…RRLQ, EQHQ…RLEE, RAQQ…RLQE, LCQL…GQVL, YELQ…QLLL, FRFF…DWLQ, and VFGR…LTAL. The residue at position 1073 (Ser1073) is a Phosphoserine. Ser1574 bears the Phosphoserine mark. Over residues 2080–2096 the composition is skewed to basic and acidic residues; it reads ERENEQKRKREEEERRK. 2 disordered regions span residues 2080-2112 and 2124-2207; these read EREN…EGSL and DGTQ…HVAT. The span at 2124-2163 shows a compositional bias: polar residues; the sequence is DGTQSKLPPSTQAPSINGVCTDTESSQPLLEQQRLEQSNV. Ser2169 and Ser2199 each carry phosphoserine. A PH domain is found at 2218 to 2328; it reads QEQMEGTLCR…WLRVVNAAIA (111 aa). Residues 2333–2388 form a disordered region; it reads ASGEPEEPVVPSASRGLTRAMTMPPVSQPEGSIVLRSKDGREREREKRFSFFKKNK. The residue at position 2354 (Thr2354) is a Phosphothreonine. Ser2359 is modified (phosphoserine). The segment covering 2368–2381 has biased composition (basic and acidic residues); it reads RSKDGREREREKRF.

It belongs to the spectrin family. In terms of tissue distribution, abundantly transcribed in the brain. Neurons are the predominant cell-type to express the gene. Found abundantly in Purkinje cells.

It localises to the cytoplasm. It is found in the cytoskeleton. Its subcellular location is the cell cortex. Probably plays an important role in neuronal membrane skeleton. This chain is Spectrin beta chain, non-erythrocytic 2 (Sptbn2), found in Rattus norvegicus (Rat).